Consider the following 272-residue polypeptide: Probable ribosomal RNA small subunit methyltransferase A (272 aa).

Residues asparagine 23, leucine 25, glycine 50, glutamate 71, aspartate 95, and asparagine 110 each coordinate S-adenosyl-L-methionine.

Belongs to the class I-like SAM-binding methyltransferase superfamily. rRNA adenine N(6)-methyltransferase family. RsmA subfamily.

Its subcellular location is the cytoplasm. In terms of biological role, specifically dimethylates two adjacent adenosines in the loop of a conserved hairpin near the 3'-end of 16S rRNA in the 30S particle. May play a critical role in biogenesis of 30S subunits. This is Probable ribosomal RNA small subunit methyltransferase A from Thermococcus onnurineus (strain NA1).